Reading from the N-terminus, the 551-residue chain is Scaffold protein OPG125 (551 aa).

It belongs to the orthopoxvirus protein OPG125 family. As to quaternary structure, homotrimer. Self-assembles to form a layer. Interacts with OPG158 (via N-terminus); this interaction is necessary for OPG125 association with membranes.

Its subcellular location is the membrane. Scaffold protein which forms a transitory spherical honeycomb lattice providing curvature and rigidity to the convex membrane of crescent and immature virions (IV). This association occurs concomitantly with viral membrane formation. Targeted by the drug rifampicin, which prevents the formation of this lattice, and hence virus morphogenesis. In the presence of rifampicin, irregularly shaped membranes that lack the honeycomb layer accumulate around areas of electron-dense viroplasm. This layer is lost from virions during maturation from IV to mature virion (MV), through the proteolysis of OPG158 N-terminus. The chain is Scaffold protein OPG125 (OPG125) from Vaccinia virus (strain Ankara) (VACV).